A 599-amino-acid chain; its full sequence is MTSISAKLRFLILIIIDSFIVTFSVFLGYAILEPYFKGYSIDLLVLSSVILLVSHHIFAYVFNLYHRAWEYASVSELMSVLKAVTSSIVVTLLLVSLLISESPFLRLYFITWMMHLLLIGGSRLFWRVYRRYFIDNAVEKKATLVVGAGQGGSVLIREMLRSQDMRMQPVLAVDDDKNKQKMTITERVKVQGYVEDIPELVKKFRIKKIIIAIPTLSQKRLNEINKICNIEGVELFKMPNIEDVLSGELEVNNLKKVEVEDLLGRDPVELDMALISRELTNKTILVTGAGGSIGSEICRQVSKFDPQKIILLGHGENSIYSIHQELSKTYGNRIEFVPVIADVQNKTRILEVMNEFKPYAVYHAAAHKHVPLMEYNPHEAIRNNILGTKNVAESAKEGEVSKFVMISTDKAVNPSNVMGATKRIAEMVIQSLNEDNSKTSFVAVRFGNVLGSRGSVIPLFKNQIESGGPVTVTHPEMTRYFMTIPEASRLVLQAGALAQGGEVFVLDMGKPVKIVDLAKNLIRLSGKKEEDIGIEFSGIRPGEKLYEELLNKNEIHPQQVYEKIYRGKVDHYIKTEVDLIVEDLINNFSKEKLLKIANR.

4 helical membrane passes run 12 to 32, 41 to 61, 79 to 99, and 102 to 122; these read ILII…YAIL, IDLL…FAYV, SVLK…SLLI, and SPFL…IGGS.

It belongs to the polysaccharide synthase family.

Its subcellular location is the cell membrane. It participates in capsule biogenesis; capsule polysaccharide biosynthesis. In terms of biological role, required for the biosynthesis of type 1 capsular polysaccharide. The sequence is that of Capsular polysaccharide biosynthesis protein CapD (capD) from Staphylococcus aureus.